The chain runs to 445 residues: Phosphoglucosamine mutase (445 aa).

Ser102 (phosphoserine intermediate) is an active-site residue. 4 residues coordinate Mg(2+): Ser102, Asp241, Asp243, and Asp245. Residue Ser102 is modified to Phosphoserine.

This sequence belongs to the phosphohexose mutase family. Mg(2+) is required as a cofactor. Activated by phosphorylation.

The catalysed reaction is alpha-D-glucosamine 1-phosphate = D-glucosamine 6-phosphate. Its function is as follows. Catalyzes the conversion of glucosamine-6-phosphate to glucosamine-1-phosphate. The chain is Phosphoglucosamine mutase from Escherichia coli O7:K1 (strain IAI39 / ExPEC).